The primary structure comprises 385 residues: Probable nitrate transporter NarT (385 aa).

Helical transmembrane passes span Thr14 to Ile34, Ile47 to Thr67, Ile69 to Phe89, Gly97 to Val117, Gly139 to Trp159, Thr161 to Gly181, Leu205 to Phe225, Gly246 to Phe266, Ile277 to Ile297, Ile302 to Ala322, Gly330 to Val350, and Leu359 to Tyr379.

It belongs to the major facilitator superfamily. Nitrate/nitrite porter (TC 2.A.1.8) family.

It is found in the cell membrane. In terms of biological role, probably required for nitrate uptake under anoxic conditions. Also possibly involved in excretion of nitrite produced by the dissimilatory reduction of nitrate. This Staphylococcus haemolyticus (strain JCSC1435) protein is Probable nitrate transporter NarT (narT).